An 84-amino-acid polypeptide reads, in one-letter code: Apoptosis inhibitor Rv3654c (84 aa).

Residues 1–39 form the signal peptide; it reads MVARHRAQAAADLASLAAAARLPSGLAAACARATLVARA.

As to quaternary structure, interacts with human polypyrimidine tract binding protein-associated splicing factor (PSF).

Its subcellular location is the secreted. The protein localises to the host cytoplasm. In terms of biological role, effector protein that participates in the suppression of macrophage apoptosis by blocking the extrinsic pathway. Recognizes the host polypyrimidine tract binding protein-associated splicing factor (PSF), which probably leads to its cleavage, diminishing the level of caspase-8 in macrophages. The chain is Apoptosis inhibitor Rv3654c from Mycobacterium tuberculosis (strain ATCC 25618 / H37Rv).